The primary structure comprises 272 residues: MNKIFAAFKPRGLSSNAFLSTLKKKYKNKKAGYSGTLDPFAKGVLIVAFGQYTKLFRFLKKTPKTYKATLWLGVYSLSLDDQNIKEIKNIKEFDLPNLQQIIDQMQGIISYTPPQFSAKRINGTRAYELAKKGIEVNLKPCQMEVFDCKILSYNHPFLNIEITVSEGAYIRSYCELFARKLGINATLSSLERIKEGKFVYNNEKSLNVLKYINLKPNFIKDLNKLENGAKIFVEELEFHDKGDYYIETEKYFSIINIKENTVKYLLNKVEKC.

The Nucleophile role is filled by Asp-38.

This sequence belongs to the pseudouridine synthase TruB family. Type 1 subfamily.

It catalyses the reaction uridine(55) in tRNA = pseudouridine(55) in tRNA. In terms of biological role, responsible for synthesis of pseudouridine from uracil-55 in the psi GC loop of transfer RNAs. In Campylobacter jejuni subsp. jejuni serotype O:2 (strain ATCC 700819 / NCTC 11168), this protein is tRNA pseudouridine synthase B.